Here is a 175-residue protein sequence, read N- to C-terminus: Trafficking protein particle complex subunit 20 (175 aa).

It belongs to the TRAPP small subunits family. Sedlin subfamily. As to quaternary structure, part of the multisubunit TRAPP (transport protein particle) I complex composed of BET3, BET5, TRS20, TRS23, TRS31 and TRS33. Part of the multisubunit TRAPP (transport protein particle) II complex composed of BET3, BET5, TRS20, TRS23, TRS31, TRS33, TRS65, TRS85, TRS120 and TRS130. Part of the multisubunit TRAPP (transport protein particle) III complex composed of BET3, BET5, TRS20, TRS23, TRS31, TRS33 and TRS85.

Its subcellular location is the golgi apparatus. It is found in the cis-Golgi network. The protein localises to the endoplasmic reticulum. The protein resides in the preautophagosomal structure. Component of the TRAPP I, TRAPP II and TRAPP III complexes which act as guanine nucleotide exchange factors (GEF) for YPT1. TRAPP I plays a key role in the late stages of endoplasmic reticulum to Golgi traffic. TRAPP II plays a role in intra-Golgi transport. TRAPP III plays a role in autophagosome formation. The sequence is that of Trafficking protein particle complex subunit 20 (TRS20) from Saccharomyces cerevisiae (strain ATCC 204508 / S288c) (Baker's yeast).